Consider the following 604-residue polypeptide: ATPase family AAA domain-containing protein 3A homolog (604 aa).

Residues 1 to 50 (MSWLLGRNRQQPQPDQTAGFSEGGGAADPEGRTAGEKSGDSQLSRAERKA) form a disordered region. Residues 8–19 (NRQQPQPDQTAG) are compositionally biased toward polar residues. Positions 29 to 50 (PEGRTAGEKSGDSQLSRAERKA) are enriched in basic and acidic residues. A coiled-coil region spans residues 62–221 (ERAADAAKTL…INLEKIRLKA (160 aa)). 358-365 (GPPGTGKT) serves as a coordination point for ATP.

Can form homooligomers.

The protein localises to the mitochondrion inner membrane. The protein resides in the mitochondrion matrix. It is found in the mitochondrion nucleoid. Functionally, required to maintain the proper number of mitochondria in neurons and muscles. The sequence is that of ATPase family AAA domain-containing protein 3A homolog from Drosophila melanogaster (Fruit fly).